The primary structure comprises 124 residues: Acidic phospholipase A2 (124 aa).

Intrachain disulfides connect C26–C116, C28–C44, C43–C95, C49–C124, C50–C88, C57–C81, and C75–C86. Positions 27, 29, and 31 each coordinate Ca(2+). Residue H47 is part of the active site. D48 serves as a coordination point for Ca(2+). Residue D89 is part of the active site.

Belongs to the phospholipase A2 family. Group II subfamily. D49 sub-subfamily. It depends on Ca(2+) as a cofactor. As to expression, expressed by the venom gland.

The protein resides in the secreted. The enzyme catalyses a 1,2-diacyl-sn-glycero-3-phosphocholine + H2O = a 1-acyl-sn-glycero-3-phosphocholine + a fatty acid + H(+). Functionally, snake venom phospholipase A2 (PLA2) that inhibits ADP-induced platelet aggregation. PLA2 catalyzes the calcium-dependent hydrolysis of the 2-acyl groups in 3-sn-phosphoglycerides. This is Acidic phospholipase A2 from Gloydius ussuriensis (Ussuri mamushi).